A 118-amino-acid polypeptide reads, in one-letter code: MATNTTEVKAIARFIRISAYKVRRVLDQIRGRSYREALIILEFMPYRATEPILKVLRSAAANAEHNAGLDRTQLVITQAYADQGPPLKRFQPRAQGRAYQIRKPTCHITVAVGAAPEK.

This sequence belongs to the universal ribosomal protein uL22 family. Part of the 50S ribosomal subunit.

In terms of biological role, this protein binds specifically to 23S rRNA; its binding is stimulated by other ribosomal proteins, e.g. L4, L17, and L20. It is important during the early stages of 50S assembly. It makes multiple contacts with different domains of the 23S rRNA in the assembled 50S subunit and ribosome. The globular domain of the protein is located near the polypeptide exit tunnel on the outside of the subunit, while an extended beta-hairpin is found that lines the wall of the exit tunnel in the center of the 70S ribosome. This is Large ribosomal subunit protein uL22 from Nostoc punctiforme (strain ATCC 29133 / PCC 73102).